Here is a 367-residue protein sequence, read N- to C-terminus: Pectate trisaccharide-lyase (367 aa).

An N-terminal signal peptide occupies residues 1 to 27 (MLMRFSRVVSLVLLLVFTAVLTGAVKA). Residues aspartate 144, aspartate 166, and aspartate 170 each coordinate Ca(2+). The stretch at 151–173 (SHHIWIDHCTFVNGNDGAVDIKK) is one PbH1 1 repeat. The active site involves arginine 224. The PbH1 2 repeat unit spans residues 263–289 (GAKVHVEGNYFMGYGAVMAEAGIAFLP).

Belongs to the polysaccharide lyase 1 family. As to quaternary structure, homotetramer. The cofactor is Ca(2+).

Its subcellular location is the secreted. It catalyses the reaction eliminative cleavage of unsaturated trigalacturonate as the major product from the reducing end of polygalacturonic acid/pectate.. Its activity is regulated as follows. Completely inactivated by EGTA. Functionally, cleaves unsaturated trigalacturonate from pectin. Activity is highest towards polygalacturonic acid, activity on methylated pectins decreases with an increasing degree of methylation. The protein is Pectate trisaccharide-lyase of Thermotoga maritima (strain ATCC 43589 / DSM 3109 / JCM 10099 / NBRC 100826 / MSB8).